The primary structure comprises 193 residues: Imidazoleglycerol-phosphate dehydratase (193 aa).

The protein belongs to the imidazoleglycerol-phosphate dehydratase family.

It is found in the cytoplasm. It catalyses the reaction D-erythro-1-(imidazol-4-yl)glycerol 3-phosphate = 3-(imidazol-4-yl)-2-oxopropyl phosphate + H2O. Its pathway is amino-acid biosynthesis; L-histidine biosynthesis; L-histidine from 5-phospho-alpha-D-ribose 1-diphosphate: step 6/9. This chain is Imidazoleglycerol-phosphate dehydratase, found in Methanospirillum hungatei JF-1 (strain ATCC 27890 / DSM 864 / NBRC 100397 / JF-1).